Reading from the N-terminus, the 303-residue chain is Heme A synthase (303 aa).

Residues 1–8 (MFGKKNLK) lie on the Cytoplasmic side of the membrane. Residues 9–29 (WLGVVATLMMTFVQLGGALVT) form a helical membrane-spanning segment. Topologically, residues 30–67 (KTGSADGCGSSWPLCHGALIPEFFPIDTIIELSHRAVS) are extracellular. C37 and C44 are disulfide-bonded. E60 is a catalytic residue. H63 provides a ligand contact to heme o. The helical transmembrane segment at 68–88 (ALSLLMVLWLVITAWKHIGYI) threads the bilayer. At 89–93 (KEIKP) the chain is on the cytoplasmic side. A helical membrane pass occupies residues 94–114 (LSIISVGFLLLQALIGAAAVI). At 115-125 (WQQNDYVLALH) the chain is on the extracellular side. H125 serves as a coordination point for heme o. The chain crosses the membrane as a helical span at residues 126 to 146 (FGISLISFSSVFLITLIIFSI). The Cytoplasmic segment spans residues 147–163 (DQKYEADELYIKKPLRR). The chain crosses the membrane as a helical span at residues 164-184 (LTWLMAIIIYCGVYTGALVRH). Residues 185 to 215 (ADASLAYGGWPLPFHDLVPHSEQDWVQLTHR) are Extracellular-facing. H214 contacts heme b. The chain crosses the membrane as a helical span at residues 216 to 236 (IMAFIVFTIIMITYIHAVKNY). Topologically, residues 237–244 (PNNRTVHY) are cytoplasmic. The chain crosses the membrane as a helical span at residues 245–265 (GYTAAFILVILQVITGALSIM). Residues 266 to 270 (TNVNL) are Extracellular-facing. The helical transmembrane segment at 271 to 291 (LIALFHALFITYLFGMTTYFI) threads the bilayer. Residue H276 coordinates heme b. Topologically, residues 292 to 303 (MLMLRSVRSDKQ) are cytoplasmic.

This sequence belongs to the COX15/CtaA family. Type 1 subfamily. Interacts with CtaB. Heme b is required as a cofactor.

It localises to the cell membrane. The catalysed reaction is Fe(II)-heme o + 2 A + H2O = Fe(II)-heme a + 2 AH2. The protein operates within porphyrin-containing compound metabolism; heme A biosynthesis; heme A from heme O: step 1/1. Its function is as follows. Catalyzes the conversion of heme O to heme A by two successive hydroxylations of the methyl group at C8. The first hydroxylation forms heme I, the second hydroxylation results in an unstable dihydroxymethyl group, which spontaneously dehydrates, resulting in the formyl group of heme A. This Staphylococcus aureus (strain MSSA476) protein is Heme A synthase.